A 259-amino-acid polypeptide reads, in one-letter code: Formate channel BtFdhC (259 aa).

The Cytoplasmic segment spans residues methionine 1–proline 26. A helical membrane pass occupies residues alanine 27–isoleucine 47. Residues arginine 48–glycine 66 lie on the Periplasmic side of the membrane. A helical transmembrane segment spans residues alanine 67–alanine 97. At lysine 98–asparagine 108 the chain is on the cytoplasmic side. A helical transmembrane segment spans residues tryptophan 109–leucine 130. Over glycine 131 to threonine 157 the chain is Periplasmic. A helical membrane pass occupies residues leucine 158–tyrosine 176. Topologically, residues glycine 177 to glycine 187 are cytoplasmic. The helical transmembrane segment at isoleucine 188–alanine 216 threads the bilayer. Residues glycine 217–asparagine 227 are Periplasmic-facing. A helical transmembrane segment spans residues phenylalanine 228–cysteine 250. Residues tyrosine 251–lysine 259 are Cytoplasmic-facing.

The protein belongs to the FNT transporter (TC 1.A.16) family.

It localises to the cell inner membrane. The catalysed reaction is formate(in) = formate(out). Functionally, acts as a formate transporter. The polypeptide is Formate channel BtFdhC (Bacillus thuringiensis).